We begin with the raw amino-acid sequence, 255 residues long: Phosphatidylcholine synthase (255 aa).

The Cytoplasmic segment spans residues 1–13 (MNPIKPPFTLNQY). Residues 14–34 (FAAWFVHVFTASAACIGVFSL) form a helical membrane-spanning segment. The Periplasmic segment spans residues 35–42 (YKIYQHDY). Residues 43–63 (VFALWLMAITVFIDAVDGSLA) traverse the membrane as a helical segment. Over 64 to 76 (RLVHVKSVLPKID) the chain is Cytoplasmic. A helical membrane pass occupies residues 77–97 (GALLDNIVDYLNYVITPCFFL). At 98–103 (LVKPGM) the chain is on the periplasmic side. The helical transmembrane segment at 104 to 124 (LPADYVVPITAAITITSAYQF) threads the bilayer. Residues 125-133 (CQDDAKTPD) lie on the Cytoplasmic side of the membrane. Residues 134-154 (HFFKGFPCYWNITVFYMYIFN) traverse the membrane as a helical segment. T155 is a topological domain (periplasmic). Residues 156-175 (SMIVNTVLLSLFCVLIFIPV) form a helical membrane-spanning segment. At 176–190 (KYVYPSRLDYLTESR) the chain is on the cytoplasmic side. Residues 191–211 (VLKILMHCCSALYGISSFCLL) form a helical membrane-spanning segment. Residues 212–217 (VNYPET) are Periplasmic-facing. Residues 218–238 (NKLWVSLSLGYVGMYLFLSFY) form a helical membrane-spanning segment. The Cytoplasmic portion of the chain corresponds to 239-255 (RTYYPMFKAKITANNKD).

It belongs to the CDP-alcohol phosphatidyltransferase class-I family. The cofactor is Mn(2+).

It is found in the cell inner membrane. The catalysed reaction is a CDP-1,2-diacyl-sn-glycerol + choline = a 1,2-diacyl-sn-glycero-3-phosphocholine + CMP + H(+). Functionally, condenses choline with CDP-diglyceride to produce phosphatidylcholine and CMP. Affects virulence of this bacterium when there is a complete loss of phosphatidylcholine formation due to absence of both the synthase (pcs) and the methylation (pmtA) pathways. Reduced virulence results from lowered yields of bacteria within host macrophages and because of loss of high multiplicity cytotoxicity. The chain is Phosphatidylcholine synthase from Legionella pneumophila subsp. pneumophila (strain Philadelphia 1 / ATCC 33152 / DSM 7513).